The sequence spans 223 residues: Deoxyribose-phosphate aldolase (223 aa).

Residue aspartate 91 is the Proton donor/acceptor of the active site. Catalysis depends on lysine 153, which acts as the Schiff-base intermediate with acetaldehyde. Residue lysine 182 is the Proton donor/acceptor of the active site.

This sequence belongs to the DeoC/FbaB aldolase family. DeoC type 1 subfamily.

The protein localises to the cytoplasm. The enzyme catalyses 2-deoxy-D-ribose 5-phosphate = D-glyceraldehyde 3-phosphate + acetaldehyde. Its pathway is carbohydrate degradation; 2-deoxy-D-ribose 1-phosphate degradation; D-glyceraldehyde 3-phosphate and acetaldehyde from 2-deoxy-alpha-D-ribose 1-phosphate: step 2/2. In terms of biological role, catalyzes a reversible aldol reaction between acetaldehyde and D-glyceraldehyde 3-phosphate to generate 2-deoxy-D-ribose 5-phosphate. The sequence is that of Deoxyribose-phosphate aldolase from Yersinia pseudotuberculosis serotype O:1b (strain IP 31758).